Reading from the N-terminus, the 231-residue chain is MLEDLKRQVLEANLALPKHNLVTLTWGNVSAVDRERGVLVIKPSGVDYSVMTADDMVVVSLESGEVVEGHKKPSSDTPTHRLLYQAFPTIGGIVHTHSRHATIWAQAGQPIPATGTTHADYFYGTIPCTRKMTEAEINGEYEWETGNVIVETFEKQGIDAAQMPGVLVHSHGPFAWGKNAEDAVHNAIVLEEVAYMGIFCRQLAPQLPDMQQSLLDKHYLRKHGAKAYYGQ.

Residues glycine 27 to asparagine 28, serine 44 to glycine 45, and serine 74 to serine 75 each bind substrate. Zn(2+) contacts are provided by aspartate 76, histidine 95, and histidine 97. Aspartate 120 functions as the Proton donor/acceptor in the catalytic mechanism. Histidine 171 contacts Zn(2+). Tyrosine 229 acts as the Proton donor/acceptor in catalysis.

The protein belongs to the aldolase class II family. AraD/FucA subfamily. In terms of assembly, homotetramer. The cofactor is Zn(2+).

The enzyme catalyses L-ribulose 5-phosphate = D-xylulose 5-phosphate. Its pathway is carbohydrate degradation; L-arabinose degradation via L-ribulose; D-xylulose 5-phosphate from L-arabinose (bacterial route): step 3/3. Its function is as follows. Involved in the degradation of L-arabinose. Catalyzes the interconversion of L-ribulose 5-phosphate (LRu5P) and D-xylulose 5-phosphate (D-Xu5P) via a retroaldol/aldol mechanism (carbon-carbon bond cleavage analogous to a class II aldolase reaction). This is L-ribulose-5-phosphate 4-epimerase from Salmonella typhimurium (strain LT2 / SGSC1412 / ATCC 700720).